The sequence spans 37 residues: Photosystem I reaction center subunit VIII (37 aa).

Residues Leu7–Leu27 form a helical membrane-spanning segment.

It belongs to the PsaI family.

Its subcellular location is the plastid. It localises to the chloroplast thylakoid membrane. Functionally, may help in the organization of the PsaL subunit. In Populus alba (White poplar), this protein is Photosystem I reaction center subunit VIII.